Here is an 884-residue protein sequence, read N- to C-terminus: Alanine--tRNA ligase (884 aa).

4 residues coordinate Zn(2+): H574, H578, C675, and H679.

Belongs to the class-II aminoacyl-tRNA synthetase family. Zn(2+) is required as a cofactor.

It localises to the cytoplasm. It carries out the reaction tRNA(Ala) + L-alanine + ATP = L-alanyl-tRNA(Ala) + AMP + diphosphate. Its function is as follows. Catalyzes the attachment of alanine to tRNA(Ala) in a two-step reaction: alanine is first activated by ATP to form Ala-AMP and then transferred to the acceptor end of tRNA(Ala). Also edits incorrectly charged Ser-tRNA(Ala) and Gly-tRNA(Ala) via its editing domain. In Ralstonia nicotianae (strain ATCC BAA-1114 / GMI1000) (Ralstonia solanacearum), this protein is Alanine--tRNA ligase.